The following is a 415-amino-acid chain: Glutamyl-tRNA reductase (415 aa).

Substrate-binding positions include 49-52, serine 104, 109-111, and glutamine 115; these read TCNR and EPQ. Cysteine 50 (nucleophile) is an active-site residue. NADP(+) is bound at residue 184-189; it reads GAGEMI.

The protein belongs to the glutamyl-tRNA reductase family. As to quaternary structure, homodimer.

The catalysed reaction is (S)-4-amino-5-oxopentanoate + tRNA(Glu) + NADP(+) = L-glutamyl-tRNA(Glu) + NADPH + H(+). The protein operates within porphyrin-containing compound metabolism; protoporphyrin-IX biosynthesis; 5-aminolevulinate from L-glutamyl-tRNA(Glu): step 1/2. Catalyzes the NADPH-dependent reduction of glutamyl-tRNA(Glu) to glutamate 1-semialdehyde (GSA). The chain is Glutamyl-tRNA reductase from Neisseria meningitidis serogroup C (strain 053442).